The primary structure comprises 590 residues: Pentatricopeptide repeat-containing protein At1g63070, mitochondrial (590 aa).

The N-terminal 34 residues, 1–34, are a transit peptide targeting the mitochondrion; the sequence is MMRSVAVIGKKCLHRHTVLLKGNPRTTLCWERSF. PPR repeat units follow at residues 74–108, 109–143, 144–178, 179–213, 214–248, 249–283, 284–318, 319–353, 355–389, 390–424, 425–459, 460–494, 495–529, and 530–564; these read SIVE…GISH, NLYT…GYGP, SIVT…GYQP, DTVT…GCQP, DLVT…KIEA, DVVI…GIKP, DVFT…NINP, DLVF…KHCF, DVVA…GLVG, NTVT…GVHP, DIMT…DMKL, DIVT…GVKP, NVVT…GPLP, and NSGT…GFAG.

The protein belongs to the PPR family. P subfamily.

The protein localises to the mitochondrion. The sequence is that of Pentatricopeptide repeat-containing protein At1g63070, mitochondrial from Arabidopsis thaliana (Mouse-ear cress).